The following is a 577-amino-acid chain: CTP synthase (577 aa).

Positions M1–L268 are amidoligase domain. S14 is a CTP binding site. S14 serves as a coordination point for UTP. S15–I20 serves as a coordination point for ATP. Residue Y55 participates in L-glutamine binding. Residue D72 participates in ATP binding. Mg(2+) is bound by residues D72 and E142. CTP-binding positions include D149–E151, K189–Q194, and K225. UTP contacts are provided by residues K189–Q194 and K225. Residues T333–S575 enclose the Glutamine amidotransferase type-1 domain. Residue G396 participates in L-glutamine binding. C423 serves as the catalytic Nucleophile; for glutamine hydrolysis. L-glutamine contacts are provided by residues L424–Q427, E447, and R503. Residues H548 and E550 contribute to the active site.

It belongs to the CTP synthase family. As to quaternary structure, homotetramer.

It catalyses the reaction UTP + L-glutamine + ATP + H2O = CTP + L-glutamate + ADP + phosphate + 2 H(+). The catalysed reaction is L-glutamine + H2O = L-glutamate + NH4(+). The enzyme catalyses UTP + NH4(+) + ATP = CTP + ADP + phosphate + 2 H(+). The protein operates within pyrimidine metabolism; CTP biosynthesis via de novo pathway; CTP from UDP: step 2/2. Allosterically activated by GTP, when glutamine is the substrate; GTP has no effect on the reaction when ammonia is the substrate. The allosteric effector GTP functions by stabilizing the protein conformation that binds the tetrahedral intermediate(s) formed during glutamine hydrolysis. Inhibited by the product CTP, via allosteric rather than competitive inhibition. In terms of biological role, catalyzes the ATP-dependent amination of UTP to CTP with either L-glutamine or ammonia as the source of nitrogen. Regulates intracellular CTP levels through interactions with the four ribonucleotide triphosphates. This is CTP synthase from Treponema pallidum (strain Nichols).